The following is a 240-amino-acid chain: Phosphatidylserine decarboxylase proenzyme (240 aa).

Catalysis depends on Ser209, which acts as the Schiff-base intermediate with substrate; via pyruvic acid. At Ser209 the chain carries Pyruvic acid (Ser); by autocatalysis.

It belongs to the phosphatidylserine decarboxylase family. PSD-A subfamily. Heterodimer of a large membrane-associated beta subunit and a small pyruvoyl-containing alpha subunit. Pyruvate serves as cofactor. Is synthesized initially as an inactive proenzyme. Formation of the active enzyme involves a self-maturation process in which the active site pyruvoyl group is generated from an internal serine residue via an autocatalytic post-translational modification. Two non-identical subunits are generated from the proenzyme in this reaction, and the pyruvate is formed at the N-terminus of the alpha chain, which is derived from the carboxyl end of the proenzyme. The post-translation cleavage follows an unusual pathway, termed non-hydrolytic serinolysis, in which the side chain hydroxyl group of the serine supplies its oxygen atom to form the C-terminus of the beta chain, while the remainder of the serine residue undergoes an oxidative deamination to produce ammonia and the pyruvoyl prosthetic group on the alpha chain.

It localises to the cell membrane. The catalysed reaction is a 1,2-diacyl-sn-glycero-3-phospho-L-serine + H(+) = a 1,2-diacyl-sn-glycero-3-phosphoethanolamine + CO2. It functions in the pathway phospholipid metabolism; phosphatidylethanolamine biosynthesis; phosphatidylethanolamine from CDP-diacylglycerol: step 2/2. Catalyzes the formation of phosphatidylethanolamine (PtdEtn) from phosphatidylserine (PtdSer). The polypeptide is Phosphatidylserine decarboxylase proenzyme (Mycobacterium avium (strain 104)).